Reading from the N-terminus, the 280-residue chain is 2-dehydro-3-deoxyphosphooctonate aldolase (280 aa).

This sequence belongs to the KdsA family.

It is found in the cytoplasm. The enzyme catalyses D-arabinose 5-phosphate + phosphoenolpyruvate + H2O = 3-deoxy-alpha-D-manno-2-octulosonate-8-phosphate + phosphate. Its pathway is carbohydrate biosynthesis; 3-deoxy-D-manno-octulosonate biosynthesis; 3-deoxy-D-manno-octulosonate from D-ribulose 5-phosphate: step 2/3. It functions in the pathway bacterial outer membrane biogenesis; lipopolysaccharide biosynthesis. This is 2-dehydro-3-deoxyphosphooctonate aldolase from Nitrosococcus oceani (strain ATCC 19707 / BCRC 17464 / JCM 30415 / NCIMB 11848 / C-107).